We begin with the raw amino-acid sequence, 466 residues long: Exodeoxyribonuclease 7 large subunit (466 aa).

It belongs to the XseA family. As to quaternary structure, heterooligomer composed of large and small subunits.

It is found in the cytoplasm. It carries out the reaction Exonucleolytic cleavage in either 5'- to 3'- or 3'- to 5'-direction to yield nucleoside 5'-phosphates.. Functionally, bidirectionally degrades single-stranded DNA into large acid-insoluble oligonucleotides, which are then degraded further into small acid-soluble oligonucleotides. The protein is Exodeoxyribonuclease 7 large subunit of Ruthia magnifica subsp. Calyptogena magnifica.